The following is a 249-amino-acid chain: Indole-3-glycerol phosphate synthase (249 aa).

It belongs to the TrpC family.

It carries out the reaction 1-(2-carboxyphenylamino)-1-deoxy-D-ribulose 5-phosphate + H(+) = (1S,2R)-1-C-(indol-3-yl)glycerol 3-phosphate + CO2 + H2O. It participates in amino-acid biosynthesis; L-tryptophan biosynthesis; L-tryptophan from chorismate: step 4/5. This Pyrobaculum neutrophilum (strain DSM 2338 / JCM 9278 / NBRC 100436 / V24Sta) (Thermoproteus neutrophilus) protein is Indole-3-glycerol phosphate synthase.